A 499-amino-acid polypeptide reads, in one-letter code: MSQLEHNIGLSIFEPVAKHRANRIVCTIGPSTQSVEALKNLMKSGMSVARMNFSHGSHEYHQTTINNVRAAAAELGLHIGIALDTKGPEIRTGLFKDGEVSFAPGDIVCVTTDPAYEKVGTKEKFYIDYPQLTNAVRPGGSIYVDDGVMTLRVVSKEDDRTLKCHVNNHHRLTDRRGINLPGCEVDLPAVSEKDRKDLEFGVAQGVDMIFASFIRTAEQVREVRAALGEKGKDILIISKIENHQGVQNIDSIIEASNGIMVARGDLGVEIPAEKVCVAQMCIISKCNVVGKPVICATQMLESMTSNPRPTRAEVSDVANAVLNGADCVMLSGETAKGKYPNEVVQYMARICVEAQSATHDTVMFNSIKNLQKIPMCPEEAVCSSAVASAFEVQAKAMLVLSNTGRSARLISKYRPNCPIICVTTRLQTCRQLNVTRSVVSVFYDAAKSGEDKDKEKRVKLGLDFAKKEKYASTGDVVVVVHADHSVKGYPNQTRLIYLP.

Arg-50 provides a ligand contact to substrate. 4 residues coordinate K(+): Asn-52, Ser-54, Asp-84, and Thr-85. Position 52–55 (Asn-52–His-55) interacts with ATP. An ATP-binding site is contributed by Arg-91. Residue Glu-241 coordinates Mg(2+). Residues Gly-264, Asp-265, and Thr-297 each contribute to the substrate site. Asp-265 contributes to the Mg(2+) binding site.

This sequence belongs to the pyruvate kinase family. Homotetramer. Mg(2+) serves as cofactor. The cofactor is K(+).

The catalysed reaction is pyruvate + ATP = phosphoenolpyruvate + ADP + H(+). It participates in carbohydrate degradation; glycolysis; pyruvate from D-glyceraldehyde 3-phosphate: step 5/5. Activated by fructose 2,6-bisphosphate, activated by the effector in a cooperative manner. This chain is Pyruvate kinase 1 (PYK1), found in Trypanosoma brucei brucei.